Reading from the N-terminus, the 365-residue chain is Quinolone epoxide rearrangement protein asqO (365 aa).

The protein belongs to the quinolone epoxide rearrangement protein penF family.

It carries out the reaction (1'E,3'E)-5-(3,3-dimethyloxiran-2-yl)-3-methylhexa-1,3-dienyl-quinolinone B = aspoquinolone A. The enzyme catalyses (1'E,3'E)-5-(3,3-dimethyloxiran-2-yl)-3-methylhexa-1,3-dienyl-quinolinone B = aspoquinolone B. It functions in the pathway secondary metabolite biosynthesis. The protein operates within alkaloid biosynthesis. It participates in mycotoxin biosynthesis. Its function is as follows. Quinolone epoxide rearrangement protein; part of the gene cluster that mediates the biosynthesis of the aspoquinolone mycotoxins. Within the pathway, asqO catalyzes an enzymatic 3-exo-tet cyclization to yield the cyclopropyl-THF ring system in aspoquinolone. The first step of the pathway is catalyzed by the nonribosomal peptide synthetase asqK that condenses anthranilic acid and O-methyl-L-tyrosine to produce 4'-methoxycyclopeptin. 4'-methoxycyclopeptin is then converted to 4'-methoxydehydrocyclopeptin by the ketoglutarate-dependent dioxygenase asqJ. AsqJ also converts its first product 4'-methoxydehydrocyclopeptin to 4'-methoxycyclopenin. The following conversion of 4'-methoxycyclopenin into 4'-methoxyviridicatin is catalyzed by the cyclopenase asqI. 4'-methoxyviridicatin is the precursor of quinolone natural products, and is further converted to quinolinone B. The prenyltransferase asqH1 then catalyzes the canonical Friedel-Crafts alkylation of quinolinone B with dimethylallyl cation to yield dimethylallyl quinolone, which is subjected to FAD-dependent dehydrogenation by the FAD-linked oxidoreductase asqF to yield conjugated aryl diene. The delta(3') double bond then serves as the site of the second alkylation with DMAPP catalyzed by the prenyltransferase asqH2 to yield a carbenium ion intermediate, which can be attacked by H(2)O to yield a styrenyl quinolone containing a C3'-hydroxyprenyl chain. The FAD-dependent monooxygenase asqG performs epoxidation of the terminal C7'-C8' olefin. Finally, after dehydratation of the epoxide at C3 by asqC, the quinolone epoxide rearrangement protein asqO catalyzes an enzymatic 3-exo-tet cyclization to yield the cyclopropyl-THF ring system in aspoquinolone. The polypeptide is Quinolone epoxide rearrangement protein asqO (Emericella nidulans (strain FGSC A4 / ATCC 38163 / CBS 112.46 / NRRL 194 / M139) (Aspergillus nidulans)).